The chain runs to 312 residues: Pyridoxal 5'-phosphate synthase subunit PDX1 (312 aa).

Asp43 serves as a coordination point for D-ribose 5-phosphate. Lys100 (schiff-base intermediate with D-ribose 5-phosphate) is an active-site residue. Gly172 lines the D-ribose 5-phosphate pocket. Residue Arg184 participates in D-glyceraldehyde 3-phosphate binding. D-ribose 5-phosphate is bound by residues Gly233 and 254-255; that span reads GS.

It belongs to the PdxS/SNZ family.

The enzyme catalyses aldehydo-D-ribose 5-phosphate + D-glyceraldehyde 3-phosphate + L-glutamine = pyridoxal 5'-phosphate + L-glutamate + phosphate + 3 H2O + H(+). Its pathway is cofactor biosynthesis; pyridoxal 5'-phosphate biosynthesis. In terms of biological role, catalyzes the formation of pyridoxal 5'-phosphate from ribose 5-phosphate (RBP), glyceraldehyde 3-phosphate (G3P) and ammonia. The ammonia is provided by PDX2. Can also use ribulose 5-phosphate and dihydroxyacetone phosphate as substrates, resulting from enzyme-catalyzed isomerization of RBP and G3P, respectively. Also plays an indirect role in resistance to singlet oxygen-generating photosensitizers. The sequence is that of Pyridoxal 5'-phosphate synthase subunit PDX1 (PDX1) from Phaseolus vulgaris (Kidney bean).